A 611-amino-acid chain; its full sequence is Solute carrier family 23 member 3 (611 aa).

The Cytoplasmic portion of the chain corresponds to 1 to 52 (MSRSPLHPIPLLSEGYQDTPAPLPPLLPPLQNPSSRSWASRVFGPSTWGLSC). Residues 53-73 (LLALQHFLVLASLLWASHLLL) form a helical membrane-spanning segment. Topologically, residues 74-88 (LHGLPPGGLSYPPAQ) are extracellular. The chain crosses the membrane as a helical span at residues 89 to 109 (LLASSFFSCGLSTVLQTWMGS). The Cytoplasmic portion of the chain corresponds to 110 to 168 (RLPLIQAPSLEFLIPALVLTNQKLPLTTKTPGNASLSLPLCSLTRSCHGLELWNTSLRE). Residues 169-189 (VSGAVVVSGLLQGTIGLLGVP) form a helical membrane-spanning segment. Over 190 to 191 (GR) the chain is Extracellular. A helical transmembrane segment spans residues 192-212 (VFPYCGPLVLAPSLVVAGLSA). The Cytoplasmic portion of the chain corresponds to 213–215 (HKE). The chain crosses the membrane as a helical span at residues 216-236 (VAQFCSAHWGLALLLILLMVV). The Extracellular segment spans residues 237-269 (CSQHLGSCQIPLCSWRPSSTSTHICIPVFRLLS). The chain crosses the membrane as a helical span at residues 270–290 (VLAPVACVWFISAFVGTSVIP). The Cytoplasmic segment spans residues 291-319 (LQLSEPSDAPWFWLPHPGEWEWPLLTPRA). The chain crosses the membrane as a helical span at residues 320 to 340 (LAAGISMALAASTSSLGCYAL). Residues 341-358 (CGQLLRLSPPPPHACSRG) are Extracellular-facing. Residues 359–379 (LSLEGLGSVLAGLLGSPLGTA) traverse the membrane as a helical segment. Residues 380–397 (SSFPNVGTVSLFQTGSRR) lie on the Cytoplasmic side of the membrane. Residues 398–417 (VAHLVGLFCMGLGLSPRLAQ) traverse the membrane as a helical segment. The Extracellular portion of the chain corresponds to 418-426 (LFTSIPLPV). The chain crosses the membrane as a helical span at residues 427–449 (LGGVLGVTQAVVLSAGFSSFHLA). The Cytoplasmic segment spans residues 450–455 (DIDSGR). Residues 456-475 (NVFIVGFSIFMALLLPRWLR) form a helical membrane-spanning segment. At 476 to 489 (EAPVLLNTGWSPLD) the chain is on the extracellular side. Residues 490-510 (MFLRSLLAEPIFLAGLLGFLL) form a helical membrane-spanning segment. The Cytoplasmic segment spans residues 511-611 (ENTISGTRAE…TASREGVRSQ (101 aa)). The tract at residues 574 to 611 (PEDSGDEGGSSKTGERADLLPNSGESYSTASREGVRSQ) is disordered. The segment covering 596–605 (SGESYSTASR) has biased composition (polar residues).

It belongs to the nucleobase:cation symporter-2 (NCS2) (TC 2.A.40) family.

Its subcellular location is the membrane. It localises to the cytoplasm. It catalyses the reaction hypoxanthine(out) + Na(+)(out) = hypoxanthine(in) + Na(+)(in). In terms of biological role, acts as a sodium-dependent hypoxanthine transporter. May show xanthine-hypoxanthine exchange activity. The chain is Solute carrier family 23 member 3 (Slc23a3) from Mus musculus (Mouse).